The chain runs to 493 residues: Neuronal acetylcholine receptor subunit alpha-6 (493 aa).

Residues 1–30 (MLNGWGRGDLRSGLCLWICGFLAFFKGSRG) form the signal peptide. Over 31 to 240 (CVSEEQLFHT…TYSFYIRRLP (210 aa)) the chain is Extracellular. 2 N-linked (GlcNAc...) asparagine glycosylation sites follow: Asn54 and Asn171. Cystine bridges form between Cys158–Cys172 and Cys222–Cys223. 3 consecutive transmembrane segments (helical) span residues 241 to 265 (MFYT…FYLP), 272 to 290 (VTLC…LVIT), and 306 to 327 (YLLF…VLNI). Residues 328–464 (HYRTPATHTM…WKYMAMVVDR (137 aa)) are Cytoplasmic-facing. The residue at position 401 (Ser401) is a Phosphoserine. Residues 465–484 (VFLWVFIIVCVFGTVGLFLQ) traverse the membrane as a helical segment.

Belongs to the ligand-gated ion channel (TC 1.A.9) family. Acetylcholine receptor (TC 1.A.9.1) subfamily. Alpha-6/CHRNA6 sub-subfamily. In terms of assembly, neuronal AChR is composed of two different types of subunits: alpha and non-alpha (beta). CHRNA6/alpha-6 subunit can be combined to CHRNB2/beta-2 and CHRNA4/alpha-4 to give rise to functional receptors. Interacts with LYPD6. As to expression, predominantly expressed in only a few brain areas, including dopaminergic neurons, norepirephrine neurons and cells of the visual system.

Its subcellular location is the synaptic cell membrane. The enzyme catalyses Ca(2+)(in) = Ca(2+)(out). It catalyses the reaction K(+)(in) = K(+)(out). It carries out the reaction Na(+)(in) = Na(+)(out). Its activity is regulated as follows. Activated by a myriad of ligands such as acetylcholine, cytisine and nicotine. CHRNA6 nAChR activity is inhibited by the antagonists alpha-conotoxin MII and PIA, a small disulfide-constrained peptides from cone snails. Functionally, component of neuronal acetylcholine receptors (nAChRs) that function as pentameric, ligand-gated cation channels with high calcium permeability among other activities. nAChRs are excitatory neurotrasnmitter receptors formed by a collection of nAChR subunits known to mediate synaptic transmission in the nervous system and the neuromuscular junction. Each nAchR subunit confers differential attributes to channel properties, including activation, deactivation and desensitization kinetics, pH sensitivity, cation permeability, and binding to allosteric modulators. CHRNA6 forms pentameric channels with CHRNB2 and CHRNA4 that exhibit high sensitivity to ACh and nicotine and are predominantly expressed in only a few brain areas, including dopaminergic neurons, norepirephrine neurons and cells of the visual system. nAChrs containing CHRNA6 subunits mediate endogenous cholinergic modulation of dopamine and gamma-aminobutyric acid (GABA) release in response to nicotine at nerve terminals. This is Neuronal acetylcholine receptor subunit alpha-6 (Chrna6) from Rattus norvegicus (Rat).